A 24-amino-acid polypeptide reads, in one-letter code: Neurotoxin 5 (24 aa).

The LCN-type CS-alpha/beta domain occupies 2–24 (RDAYIAQNYNCVYTCFKNDYCND).

Belongs to the long (4 C-C) scorpion toxin superfamily. Sodium channel inhibitor family. Alpha subfamily. As to expression, expressed by the venom gland.

The protein localises to the secreted. In terms of biological role, binds to sodium channels (Nav) and inhibits the inactivation of the activated channels, thereby blocking neuronal transmission. The polypeptide is Neurotoxin 5 (Buthus occitanus tunetanus (Common European scorpion)).